A 361-amino-acid polypeptide reads, in one-letter code: MAPTLLTTQFSNPAEVTDFVVYKGNGVKGLSETGIKALPEQYIQPLEERLINKFVNETDEAIPVIDMSNPDEDRVAEAVCDAAEKWGFFQVINHGVPLEVLDDVKAATHKFFNLPVEEKRKFTKENSLSTTVRFGTSFSPLAEQALEWKDYLSLFFVSEAEAEQFWPDICRNETLEYINKSKKMVRRLLEYLGKNLNVKELDETKESLFMGSIRVNLNYYPICPNPDLTVGVGRHSDVSSLTILLQDQIGGLHVRSLASGNWVHVPPVAGSFVINIGDAMQIMSNGLYKSVEHRVLANGYNNRISVPIFVNPKPESVIGPLPEVIANGEEPIYRDVLYSDYVKYFFRKAHDGKKTVDYAKI.

The Fe2OG dioxygenase domain maps to 204-312 (TKESLFMGSI…RISVPIFVNP (109 aa)). Position 220 (Tyr-220) interacts with 2-oxoglutarate. Positions 235, 237, and 293 each coordinate Fe cation. Residues Arg-303 and Ser-305 each coordinate 2-oxoglutarate.

It belongs to the iron/ascorbate-dependent oxidoreductase family. L-ascorbate serves as cofactor. Fe(2+) is required as a cofactor. In terms of tissue distribution, highly expressed in roots, especially in the cortex.

The enzyme catalyses (E)-feruloyl-CoA + 2-oxoglutarate + O2 = (E)-6-hydroxyferuloyl-CoA + succinate + CO2. It catalyses the reaction (E)-6-hydroxyferuloyl-CoA = scopoletin + CoA. It functions in the pathway phenylpropanoid metabolism. In terms of biological role, 2-oxoglutarate (OG)- and Fe(II)-dependent dioxygenase (2OGD) involved in scopoletin biosynthesis. Converts feruloyl CoA into 6'-hydroxyferuloyl CoA but has no activity with ferulic acid, feruloylquinic acid, caffeic acid, caffeoyl CoA, p-coumaric acid, cinnamic acid, cinnamoyl CoA or benzoyl CoA. Required for the production and secretion of compounds (e.g. fluorescent coumarins) that facilitate the mobilization and uptake of iron from sources with low bioavailability or in high pH-induced iron deficiency conditions. Involved in the pathway of sideretin biosynthesis from feruloyl CoA, a redox-active catecholic metabolite exuded by roots in response to iron deficiency in order to facilitate the uptake of iron; this pathway consists in the successive conversion from feruloyl CoA to scopoletin, from scopoletin to fraxetin and from fraxetin to sideretin. Catalyzes the biosynthesis of scopoletin from feruloyl CoA. The chain is Feruloyl CoA ortho-hydroxylase 1 from Arabidopsis thaliana (Mouse-ear cress).